The primary structure comprises 201 residues: Small ribosomal subunit protein uS4c (201 aa).

The disordered stretch occupies residues L15–Y45. Residues H35–Y45 show a composition bias toward basic and acidic residues. The region spanning M90 to L153 is the S4 RNA-binding domain.

This sequence belongs to the universal ribosomal protein uS4 family. Part of the 30S ribosomal subunit. Contacts protein S5. The interaction surface between S4 and S5 is involved in control of translational fidelity.

The protein resides in the plastid. The protein localises to the chloroplast. Functionally, one of the primary rRNA binding proteins, it binds directly to 16S rRNA where it nucleates assembly of the body of the 30S subunit. Its function is as follows. With S5 and S12 plays an important role in translational accuracy. The sequence is that of Small ribosomal subunit protein uS4c (rps4) from Pyropia yezoensis (Susabi-nori).